The sequence spans 384 residues: Putative 8-amino-7-oxononanoate synthase (384 aa).

Residue Arg-18 participates in substrate binding. Residue 105–106 (GY) participates in pyridoxal 5'-phosphate binding. A substrate-binding site is contributed by His-130. Pyridoxal 5'-phosphate-binding positions include Ser-176, 201–204 (DDAH), and 233–236 (TLSK). Lys-236 is modified (N6-(pyridoxal phosphate)lysine). Residue Thr-349 coordinates substrate.

It belongs to the class-II pyridoxal-phosphate-dependent aminotransferase family. BioF subfamily. Homodimer. Pyridoxal 5'-phosphate is required as a cofactor.

It catalyses the reaction 6-carboxyhexanoyl-[ACP] + L-alanine + H(+) = (8S)-8-amino-7-oxononanoate + holo-[ACP] + CO2. It participates in cofactor biosynthesis; biotin biosynthesis. In terms of biological role, catalyzes the decarboxylative condensation of pimeloyl-[acyl-carrier protein] and L-alanine to produce 8-amino-7-oxononanoate (AON), [acyl-carrier protein], and carbon dioxide. This chain is Putative 8-amino-7-oxononanoate synthase (bioF), found in Desulfovibrio desulfuricans (strain ATCC 27774 / DSM 6949 / MB).